The primary structure comprises 78 residues: Translation initiation factor IF-1, chloroplastic (78 aa).

The S1-like domain maps to 1–72 (MKKQKLIDME…TKGRITYRFH (72 aa)).

Belongs to the IF-1 family. Component of the 30S ribosomal translation pre-initiation complex which assembles on the 30S ribosome in the order IF-2 and IF-3, IF-1 and N-formylmethionyl-tRNA(fMet); mRNA recruitment can occur at any time during PIC assembly.

The protein resides in the plastid. Its subcellular location is the chloroplast. Functionally, one of the essential components for the initiation of protein synthesis. Stabilizes the binding of IF-2 and IF-3 on the 30S subunit to which N-formylmethionyl-tRNA(fMet) subsequently binds. Helps modulate mRNA selection, yielding the 30S pre-initiation complex (PIC). Upon addition of the 50S ribosomal subunit IF-1, IF-2 and IF-3 are released leaving the mature 70S translation initiation complex. The polypeptide is Translation initiation factor IF-1, chloroplastic (Huperzia lucidula (Shining clubmoss)).